Here is a 158-residue protein sequence, read N- to C-terminus: UPAR/Ly6 domain-containing protein crim (158 aa).

The signal sequence occupies residues 1–22 (MHYHTNLIAALLLAALIHEGSA). Topologically, residues 23–136 (IWCYRCTSAT…FCFLDHRCNG (114 aa)) are extracellular. N-linked (GlcNAc...) asparagine glycosylation occurs at Asn-107. Asn-135 carries the GPI-anchor amidated asparagine lipid modification. A propeptide spans 136–158 (GASGLQTSAVIGLLTLIPALLLR) (removed in mature form). The chain crosses the membrane as a helical span at residues 137–157 (ASGLQTSAVIGLLTLIPALLL). Arg-158 is a topological domain (cytoplasmic).

It belongs to the quiver family.

Its subcellular location is the membrane. In terms of biological role, required for septate junction assembly possibly by organizing the preassembly and transport of septate junction proteins. Involved in epithelial cell septate junction-mediated paracellular barrier functions of trachea, hindgut and salivary gland. This Drosophila melanogaster (Fruit fly) protein is UPAR/Ly6 domain-containing protein crim.